A 333-amino-acid polypeptide reads, in one-letter code: Malate dehydrogenase (333 aa).

Residues 10–15 (GGGQIG) and aspartate 34 contribute to the NAD(+) site. Arginine 83 and arginine 89 together coordinate substrate. NAD(+)-binding positions include asparagine 96 and 119 to 121 (ITN). Positions 121 and 152 each coordinate substrate. Histidine 176 (proton acceptor) is an active-site residue.

The protein belongs to the LDH/MDH superfamily. MDH type 3 family.

The enzyme catalyses (S)-malate + NAD(+) = oxaloacetate + NADH + H(+). Catalyzes the reversible oxidation of malate to oxaloacetate. The sequence is that of Malate dehydrogenase from Parvibaculum lavamentivorans (strain DS-1 / DSM 13023 / NCIMB 13966).